Consider the following 232-residue polypeptide: MGGSSYDVLRKQARSLENEIDLKLVAFSKIGAGSGGGGSGGLGGVDTSPLLGEHVFDSLSEEIEQMLEKLSSLNESMSDLPASGAAAMHTLQRHREILQGYRQEFNKICANHTMRIEREELLRGSGLATSSGSPSISGLNRREMYLKESGHLNSASHLVNDQINIAIETRDHLHAQRQAFKRLQTRFNDISNRFPLISSLIQRINIKKRRDSLILGAVIGFCVILLLLYAFN.

The Cytoplasmic portion of the chain corresponds to 1–211 (MGGSSYDVLR…QRINIKKRRD (211 aa)). Coiled coils occupy residues 6-23 (YDVL…IDLK) and 52-80 (GEHV…MSDL). Residues 212 to 232 (SLILGAVIGFCVILLLLYAFN) form a helical; Anchor for type IV membrane protein membrane-spanning segment.

It belongs to the GOSR1 family. Component of several multiprotein Golgi SNARE complexes.

The protein localises to the golgi apparatus membrane. Its function is as follows. Involved in transport from the ER to the Golgi apparatus as well as in intra-Golgi transport. It belongs to a super-family of proteins called t-SNAREs or soluble NSF (N-ethylmaleimide-sensitive factor) attachment protein receptor. This chain is Golgi SNAP receptor complex member 1 (Gos28), found in Drosophila melanogaster (Fruit fly).